The sequence spans 604 residues: Ectonucleoside triphosphate diphosphohydrolase 7 (604 aa).

Residues 1–28 (MARISFSYLCPASWYFTVPTVSPFLRQR) are Cytoplasmic-facing. A helical transmembrane segment spans residues 29-49 (VAFLGLFFISCLLLLMLIIDF). Over 50–546 (RHWSASLPRD…QAHGSWFRLS (497 aa)) the chain is Vesicular. The active-site Proton acceptor is E217. N-linked (GlcNAc...) asparagine glycosylation occurs at N330. A disulfide bridge links C448 with C477. Residues 547-567 (FVYNHYLFFACILVVLLAIFL) traverse the membrane as a helical segment. Topologically, residues 568-604 (YLLRLRRIHHRQTRASAPLDLLWLEEVVPMMGVQVGP) are cytoplasmic.

It belongs to the GDA1/CD39 NTPase family. Ca(2+) is required as a cofactor. The cofactor is Mg(2+).

The protein localises to the cytoplasmic vesicle membrane. It carries out the reaction a ribonucleoside 5'-triphosphate + H2O = a ribonucleoside 5'-diphosphate + phosphate + H(+). It catalyses the reaction UTP + H2O = UDP + phosphate + H(+). The catalysed reaction is GTP + H2O = GDP + phosphate + H(+). The enzyme catalyses CTP + H2O = CDP + phosphate + H(+). Its function is as follows. Catalyzes the hydrolysis of nucleoside triphosphates and diphosphates in a calcium- or magnesium-dependent manner. Preferentially hydrolyzes nucleoside 5'-triphosphates, with substrate preference for UTP &gt; GTP &gt; CTP. Hydrolyzes ATP and nucleoside diphosphates only to a minor extent. This chain is Ectonucleoside triphosphate diphosphohydrolase 7 (ENTPD7), found in Homo sapiens (Human).